A 230-amino-acid chain; its full sequence is Flagellar L-ring protein (230 aa).

Positions 1–21 (MMLKTVLRLPVCAALLALAAG) are cleaved as a signal peptide. Cys22 is lipidated: N-palmitoyl cysteine. The S-diacylglycerol cysteine moiety is linked to residue Cys22. Residues 34 to 53 (PLTAPPPPPPQPSARPNGSI) are disordered. The span at 36–46 (TAPPPPPPQPS) shows a compositional bias: pro residues.

Belongs to the FlgH family. The basal body constitutes a major portion of the flagellar organelle and consists of four rings (L,P,S, and M) mounted on a central rod.

It is found in the cell outer membrane. It localises to the bacterial flagellum basal body. Assembles around the rod to form the L-ring and probably protects the motor/basal body from shearing forces during rotation. The sequence is that of Flagellar L-ring protein from Bordetella parapertussis (strain 12822 / ATCC BAA-587 / NCTC 13253).